The chain runs to 150 residues: Ribosome maturation factor RimP (150 aa).

Belongs to the RimP family.

The protein resides in the cytoplasm. Required for maturation of 30S ribosomal subunits. This Methylococcus capsulatus (strain ATCC 33009 / NCIMB 11132 / Bath) protein is Ribosome maturation factor RimP.